We begin with the raw amino-acid sequence, 929 residues long: Thrombospondin-3b (929 aa).

The N-terminal stretch at 1-22 (MELRKIVPNLLVLYVAVHFSQS) is a signal peptide. The region spanning 24–192 (EIKVINVLEL…VESVKLALGG (169 aa)) is the Laminin G-like domain. Asparagine 45 carries an N-linked (GlcNAc...) asparagine glycan. 18 cysteine pairs are disulfide-bonded: cysteine 277–cysteine 288, cysteine 282–cysteine 299, cysteine 319–cysteine 343, cysteine 349–cysteine 362, cysteine 356–cysteine 371, cysteine 374–cysteine 386, cysteine 392–cysteine 406, cysteine 400–cysteine 416, cysteine 418–cysteine 429, cysteine 445–cysteine 452, cysteine 457–cysteine 477, cysteine 493–cysteine 513, cysteine 516–cysteine 536, cysteine 552–cysteine 572, cysteine 575–cysteine 595, cysteine 613–cysteine 633, cysteine 653–cysteine 673, and cysteine 689–cysteine 910. Residues 345-384 (DIDECAELSGSCVPNSVCINTVGSFKCGQCKAGFVGNQTV) form the EGF-like 1; calcium-binding domain. N-linked (GlcNAc...) asparagine glycosylation occurs at asparagine 381. An EGF-like 2 domain is found at 388–430 (ARRTCETLGYSPCDVNSHCVMGRNSDVSCVCNVGWAGNGNICG). TSP type-3 repeat units follow at residues 431–465 (PDSDIDGYPDEPLPCMDNDKHCRADNCANTPNSGQ), 466–501 (EDTDGDGIGDQCDEDADGDGIKNVEDNCRLVPNKDQ), 502–524 (QNSDTDSYGDACDNCPNVPNGDQ), 525–560 (LDTDGNGKGDICDTDIDGDGIPNVLDNCPKIPNPMQ), 561–583 (TDRDGDGVGDACDSCPEVNDPLQ), 584–621 (SDMDNDLVGDVCDTNKDIDGDGYQDTRDNCPEVPNSSQ), 622–661 (LDSDNDGIGDECDDDDDNDGIPDILPPGPDNCRLVPNPSQ), and 662–697 (IDTDANGVGDVCETDFDNDKVTDLLDACPESAEVTM). The segment covering 602-613 (DGDGYQDTRDNC) has biased composition (basic and acidic residues). The interval 602 to 651 (DGDGYQDTRDNCPEVPNSSQLDSDNDGIGDECDDDDDNDGIPDILPPGPD) is disordered. N-linked (GlcNAc...) asparagine glycosylation is present at asparagine 618. Residues 624 to 641 (SDNDGIGDECDDDDDNDG) show a composition bias toward acidic residues. Residues 701–915 (RAFQTVILDP…LGYRCNDSIP (215 aa)) enclose the TSP C-terminal domain. Asparagine 911 is a glycosylation site (N-linked (GlcNAc...) asparagine).

This sequence belongs to the thrombospondin family. As to quaternary structure, oligomer; disulfide-linked.

Its function is as follows. Adhesive glycoprotein that mediates cell-to-cell and cell-to-matrix interactions. Can bind to fibrinogen, fibronectin, laminin and type V collagen. This is Thrombospondin-3b from Danio rerio (Zebrafish).